The primary structure comprises 341 residues: Hyaluronan and proteoglycan link protein 2 (341 aa).

The N-terminal stretch at 1-27 (MPSRIPLPAFCCFLLPWAFTSFHKALG) is a signal peptide. One can recognise an Ig-like V-type domain in the interval 35 to 143 (PHYLLPPIHE…GIEDESVALT (109 aa)). Cystine bridges form between C58–C129, C171–C241, C195–C216, C266–C337, and C291–C312. Link domains are found at residues 149–243 (VVFP…FCFT) and 246–339 (LAGQ…YCYA).

This sequence belongs to the HAPLN family. Brain. Predominantly expressed by neurons. Colocalizes with versican V2 in developing and adult cerebellar white matter and at the nodes of Ranvier.

It is found in the secreted. It localises to the extracellular space. The protein resides in the extracellular matrix. Functionally, mediates a firm binding of versican V2 to hyaluronic acid. May play a pivotal role in the formation of the hyaluronan-associated matrix in the central nervous system (CNS) which facilitates neuronal conduction and general structural stabilization. Binds to hyaluronic acid. In Mus musculus (Mouse), this protein is Hyaluronan and proteoglycan link protein 2 (Hapln2).